The sequence spans 249 residues: MHTAAQFSISTLNNLYEISSVEVGQHFYWQIGSFEVHAQVLITSWIVIAILLSLAVLATRDLQTIPTSGQNFVEYVLEFIRDLTRTQIGEEEYRPWVPFIGTMFLFIFVSNWSGALLPWRVLELPHGELAAPTNDINTTVALALLTSVAYFYAGLHKRGLNYFGKYIQPTPVLLPINILEDFTKPLSLSFRLFGNILADELVVAVLISLVPLVVPIPMMFLGLFTSAIQALIFATLAAAYIGESMEGHH.

Helical transmembrane passes span 38–58 (AQVL…AVLA), 97–117 (VPFI…GALL), 136–156 (INTT…AGLH), 201–221 (LVVA…MMFL), and 222–242 (GLFT…AYIG).

This sequence belongs to the ATPase A chain family. In terms of assembly, F-type ATPases have 2 components, CF(1) - the catalytic core - and CF(0) - the membrane proton channel. CF(1) has five subunits: alpha(3), beta(3), gamma(1), delta(1), epsilon(1). CF(0) has four main subunits: a, b, b' and c.

Its subcellular location is the plastid. The protein resides in the chloroplast thylakoid membrane. Key component of the proton channel; it plays a direct role in the translocation of protons across the membrane. The chain is ATP synthase subunit a, chloroplastic from Physcomitrium patens (Spreading-leaved earth moss).